The primary structure comprises 968 residues: RNA polymerase-associated protein RapA (968 aa).

Residues 163–332 enclose the Helicase ATP-binding domain; the sequence is EVGRRYAPRV…FARLRLLDPD (170 aa). 176 to 183 is a binding site for ATP; that stretch reads DEVGLGKT. A DEAH box motif is present at residues 278-281; that stretch reads DEAH. The 153-residue stretch at 491–643 folds into the Helicase C-terminal domain; it reads RVDWLIAFLK…ELTCPSGHVL (153 aa).

Belongs to the SNF2/RAD54 helicase family. RapA subfamily. As to quaternary structure, interacts with the RNAP. Has a higher affinity for the core RNAP than for the holoenzyme. Its ATPase activity is stimulated by binding to RNAP.

Functionally, transcription regulator that activates transcription by stimulating RNA polymerase (RNAP) recycling in case of stress conditions such as supercoiled DNA or high salt concentrations. Probably acts by releasing the RNAP, when it is trapped or immobilized on tightly supercoiled DNA. Does not activate transcription on linear DNA. Probably not involved in DNA repair. The protein is RNA polymerase-associated protein RapA of Shewanella putrefaciens (strain CN-32 / ATCC BAA-453).